Reading from the N-terminus, the 85-residue chain is U4-theraphotoxin-Hhn1o (85 aa).

A signal peptide spans 1 to 22 (MKVTLIAILTCAAVLVLHTTAA). A propeptide spanning residues 23-48 (EELEAESQLMEVGMPDTELAAVDEER) is cleaved from the precursor. 3 disulfide bridges follow: cysteine 52-cysteine 66, cysteine 56-cysteine 77, and cysteine 71-cysteine 82.

This sequence belongs to the neurotoxin 12 (Hwtx-2) family. 02 (Hwtx-2) subfamily. In terms of tissue distribution, expressed by the venom gland.

It localises to the secreted. Its function is as follows. Postsynaptic neurotoxin. The protein is U4-theraphotoxin-Hhn1o of Cyriopagopus hainanus (Chinese bird spider).